Consider the following 118-residue polypeptide: Holo-[acyl-carrier-protein] synthase (118 aa).

Residues Asp-8 and Glu-58 each coordinate Mg(2+).

Belongs to the P-Pant transferase superfamily. AcpS family. Requires Mg(2+) as cofactor.

The protein resides in the cytoplasm. The enzyme catalyses apo-[ACP] + CoA = holo-[ACP] + adenosine 3',5'-bisphosphate + H(+). In terms of biological role, transfers the 4'-phosphopantetheine moiety from coenzyme A to a Ser of acyl-carrier-protein. The sequence is that of Holo-[acyl-carrier-protein] synthase from Listeria innocua serovar 6a (strain ATCC BAA-680 / CLIP 11262).